Reading from the N-terminus, the 106-residue chain is MLSQSLLSGMRVLRTEARRNFGIVAPALNKASDPIQQLFLDKVREYKQKSAGGKLVDSNPDIERELKTELDRVAKQFGSDGKTDMLKFPEFQFPDVKVDPITQAPQ.

The protein belongs to the eukaryotic ATPase subunit F6 family. In terms of assembly, F-type ATPases have 2 components, CF(1) - the catalytic core - and CF(0) - the membrane proton channel. CF(0) seems to have nine subunits: a, b, c, d, e, f, g, F6 and 8 (or A6L).

The protein localises to the mitochondrion. It is found in the mitochondrion inner membrane. Functionally, mitochondrial membrane ATP synthase (F(1)F(0) ATP synthase or Complex V) produces ATP from ADP in the presence of a proton gradient across the membrane which is generated by electron transport complexes of the respiratory chain. F-type ATPases consist of two structural domains, F(1) - containing the extramembraneous catalytic core and F(0) - containing the membrane proton channel, linked together by a central stalk and a peripheral stalk. During catalysis, ATP synthesis in the catalytic domain of F(1) is coupled via a rotary mechanism of the central stalk subunits to proton translocation. Part of the complex F(0) domain and the peripheric stalk, which acts as a stator to hold the catalytic alpha(3)beta(3) subcomplex and subunit a/ATP6 static relative to the rotary elements. The chain is ATP synthase-coupling factor 6, mitochondrial from Drosophila melanogaster (Fruit fly).